A 181-amino-acid polypeptide reads, in one-letter code: Protein GrpE (181 aa).

Over residues 1 to 10 the composition is skewed to polar residues; it reads MENTQENPAT. A disordered region spans residues 1–33; the sequence is MENTQENPATPSAEDIGSEKQAAQGAAPAAEAA. A compositionally biased stretch (low complexity) spans 21 to 33; that stretch reads QAAQGAAPAAEAA.

Belongs to the GrpE family. In terms of assembly, homodimer.

The protein localises to the cytoplasm. Participates actively in the response to hyperosmotic and heat shock by preventing the aggregation of stress-denatured proteins, in association with DnaK and GrpE. It is the nucleotide exchange factor for DnaK and may function as a thermosensor. Unfolded proteins bind initially to DnaJ; upon interaction with the DnaJ-bound protein, DnaK hydrolyzes its bound ATP, resulting in the formation of a stable complex. GrpE releases ADP from DnaK; ATP binding to DnaK triggers the release of the substrate protein, thus completing the reaction cycle. Several rounds of ATP-dependent interactions between DnaJ, DnaK and GrpE are required for fully efficient folding. The polypeptide is Protein GrpE (Burkholderia cenocepacia (strain ATCC BAA-245 / DSM 16553 / LMG 16656 / NCTC 13227 / J2315 / CF5610) (Burkholderia cepacia (strain J2315))).